The following is a 160-amino-acid chain: MKTSVLLAITAMCSDDWLLVRMKIRPFDKNTDIRIGDIHLRDNCPVTRLLSFNYAFSYPVTSCGIKKIMFQTNDDAILSEISYKPRLHTTYEFPVVCFVKRLKFPSVMHFGMSGFDAHTLKEIPQKTKGQESPTPTQSKTWTLNFNSVNKEQLSKKSLYQ.

The signal sequence occupies residues 1 to 13 (MKTSVLLAITAMC).

The protein belongs to the PLAC1 family.

Its subcellular location is the secreted. The polypeptide is Oocyte-secreted protein 4B (Homo sapiens (Human)).